The chain runs to 548 residues: T-complex protein 1 subunit alpha (548 aa).

It belongs to the TCP-1 chaperonin family. In terms of assembly, heterooligomeric complex of about 850 to 900 kDa that forms two stacked rings, 12 to 16 nm in diameter.

The protein localises to the cytoplasm. In terms of biological role, molecular chaperone; assists the folding of proteins upon ATP hydrolysis. Known to play a role, in vitro, in the folding of actin and tubulin. The chain is T-complex protein 1 subunit alpha (tcp1) from Dictyostelium discoideum (Social amoeba).